The chain runs to 262 residues: Type III pantothenate kinase (262 aa).

6 to 13 (DAGNTNMV) provides a ligand contact to ATP. Substrate-binding positions include Tyr100 and 107-110 (GADR). Asp109 (proton acceptor) is an active-site residue. Asp129 is a binding site for K(+). Thr132 is a binding site for ATP. Thr184 serves as a coordination point for substrate.

The protein belongs to the type III pantothenate kinase family. In terms of assembly, homodimer. NH4(+) is required as a cofactor. It depends on K(+) as a cofactor.

It is found in the cytoplasm. It carries out the reaction (R)-pantothenate + ATP = (R)-4'-phosphopantothenate + ADP + H(+). The protein operates within cofactor biosynthesis; coenzyme A biosynthesis; CoA from (R)-pantothenate: step 1/5. Functionally, catalyzes the phosphorylation of pantothenate (Pan), the first step in CoA biosynthesis. This is Type III pantothenate kinase from Clostridium tetani (strain Massachusetts / E88).